A 304-amino-acid polypeptide reads, in one-letter code: Porphobilinogen deaminase (304 aa).

An S-(dipyrrolylmethanemethyl)cysteine modification is found at cysteine 241.

The protein belongs to the HMBS family. Monomer. Dipyrromethane is required as a cofactor.

It carries out the reaction 4 porphobilinogen + H2O = hydroxymethylbilane + 4 NH4(+). Its pathway is porphyrin-containing compound metabolism; protoporphyrin-IX biosynthesis; coproporphyrinogen-III from 5-aminolevulinate: step 2/4. In terms of biological role, tetrapolymerization of the monopyrrole PBG into the hydroxymethylbilane pre-uroporphyrinogen in several discrete steps. The protein is Porphobilinogen deaminase of Vesicomyosocius okutanii subsp. Calyptogena okutanii (strain HA).